The following is a 542-amino-acid chain: CTP synthase (542 aa).

The tract at residues methionine 1–isoleucine 265 is amidoligase domain. Serine 13 contributes to the CTP binding site. Serine 13 is a UTP binding site. Residue serine 14 to leucine 19 coordinates ATP. Position 54 (tyrosine 54) interacts with L-glutamine. Aspartate 71 provides a ligand contact to ATP. Mg(2+) is bound by residues aspartate 71 and glutamate 139. Residues aspartate 146–glutamate 148, lysine 186–glutamine 191, and lysine 222 each bind CTP. UTP contacts are provided by residues lysine 186–glutamine 191 and lysine 222. Arginine 238 to valine 240 contributes to the ATP binding site. A Glutamine amidotransferase type-1 domain is found at threonine 291–leucine 541. Glycine 353 provides a ligand contact to L-glutamine. Cysteine 380 serves as the catalytic Nucleophile; for glutamine hydrolysis. Residues phenylalanine 381–glutamine 384, glutamate 404, and arginine 469 contribute to the L-glutamine site. Residues histidine 514 and glutamate 516 contribute to the active site.

Belongs to the CTP synthase family. In terms of assembly, homotetramer.

The catalysed reaction is UTP + L-glutamine + ATP + H2O = CTP + L-glutamate + ADP + phosphate + 2 H(+). It carries out the reaction L-glutamine + H2O = L-glutamate + NH4(+). The enzyme catalyses UTP + NH4(+) + ATP = CTP + ADP + phosphate + 2 H(+). It participates in pyrimidine metabolism; CTP biosynthesis via de novo pathway; CTP from UDP: step 2/2. Allosterically activated by GTP, when glutamine is the substrate; GTP has no effect on the reaction when ammonia is the substrate. The allosteric effector GTP functions by stabilizing the protein conformation that binds the tetrahedral intermediate(s) formed during glutamine hydrolysis. Inhibited by the product CTP, via allosteric rather than competitive inhibition. Its function is as follows. Catalyzes the ATP-dependent amination of UTP to CTP with either L-glutamine or ammonia as the source of nitrogen. Regulates intracellular CTP levels through interactions with the four ribonucleotide triphosphates. The polypeptide is CTP synthase (Beijerinckia indica subsp. indica (strain ATCC 9039 / DSM 1715 / NCIMB 8712)).